Consider the following 381-residue polypeptide: Sensor histidine kinase FlgS (381 aa).

Residues 177–381 (HLAHEIRNPV…TFEIKILNAS (205 aa)) enclose the Histidine kinase domain. Residue His-180 is modified to Phosphohistidine; by autocatalysis.

In terms of assembly, interacts (via its C-terminal kinase domain) with FlhA (via N-terminus). Post-translationally, autophosphorylated.

The enzyme catalyses ATP + protein L-histidine = ADP + protein N-phospho-L-histidine.. Member of the two-component regulatory system FlgR/FlgS that induces the transcriptional induction of the genes needed in motility and flagellar biogenesis. Also plays an essential role in bacterial survival at pH 2.5 independently of FlgR. Functions as a sensor protein kinase which is autophosphorylated at a histidine residue and transfers its phosphate group to the conserved aspartic acid residue in the regulatory domain of FlgR. In turn, FlgR functions as a transcriptional regulator initiating transcription from RpoN-dependent promoters. This Helicobacter pylori (strain ATCC 700392 / 26695) (Campylobacter pylori) protein is Sensor histidine kinase FlgS (flgS).